The following is a 942-amino-acid chain: Protein translocase subunit SecA (942 aa).

ATP is bound by residues glutamine 90, 108 to 112 (GEGKT), and aspartate 509.

The protein belongs to the SecA family. Monomer and homodimer. Part of the essential Sec protein translocation apparatus which comprises SecA, SecYEG and auxiliary proteins SecDF. Other proteins may also be involved.

The protein localises to the cell inner membrane. Its subcellular location is the cellular thylakoid membrane. It localises to the cytoplasm. It catalyses the reaction ATP + H2O + cellular proteinSide 1 = ADP + phosphate + cellular proteinSide 2.. Its function is as follows. Part of the Sec protein translocase complex. Interacts with the SecYEG preprotein conducting channel. Has a central role in coupling the hydrolysis of ATP to the transfer of proteins into and across the cell membrane, serving as an ATP-driven molecular motor driving the stepwise translocation of polypeptide chains across the membrane. In terms of biological role, probably participates in protein translocation into and across both the cytoplasmic and thylakoid membranes in cyanobacterial cells. This is Protein translocase subunit SecA from Prochlorococcus marinus (strain NATL2A).